Here is a 943-residue protein sequence, read N- to C-terminus: Translation initiation factor IF-2 (943 aa).

Low complexity predominate over residues 99–113; sequence VKAAQTQAAPVQPEQ. The interval 99–354 is disordered; sequence VKAAQTQAAP…LEPNQHAFQA (256 aa). Residues 117–141 show a composition bias toward basic and acidic residues; sequence DAVKARAEAAARAEARAKAEAEAAK. Over residues 145-172 the composition is skewed to low complexity; sequence AKAGNKAKPAAQKPTEAKAETAPVAAET. Residues 173–197 are compositionally biased toward basic and acidic residues; the sequence is KPAEPKEKAVKPKHERNGKGKDAKK. A compositionally biased stretch (low complexity) spans 200-215; that stretch reads KPAAPAVPQPVVSAEE. Over residues 216–250 the composition is skewed to basic and acidic residues; sequence QAQRDEEARRAAALRAHQEALLKEKQERQARREAM. The segment covering 251–264 has biased composition (low complexity); that stretch reads KQQAEQQAKAAQEA. Basic and acidic residues-rich tracts occupy residues 295–308 and 319–335; these read AKKE…DEGQ and GGRD…ERVR. Positions 443–612 constitute a tr-type G domain; the sequence is PRPPVVTVMG…LLEAEVLELT (170 aa). The G1 stretch occupies residues 452–459; sequence GHVDHGKT. 452–459 provides a ligand contact to GTP; that stretch reads GHVDHGKT. Residues 477 to 481 are G2; the sequence is GITQH. Residues 498–501 form a G3 region; that stretch reads DTPG. Residues 498–502 and 552–555 each bind GTP; these read DTPGH and NKID. The interval 552–555 is G4; it reads NKID. The G5 stretch occupies residues 588-590; that stretch reads SAK.

Belongs to the TRAFAC class translation factor GTPase superfamily. Classic translation factor GTPase family. IF-2 subfamily.

It is found in the cytoplasm. Functionally, one of the essential components for the initiation of protein synthesis. Protects formylmethionyl-tRNA from spontaneous hydrolysis and promotes its binding to the 30S ribosomal subunits. Also involved in the hydrolysis of GTP during the formation of the 70S ribosomal complex. The sequence is that of Translation initiation factor IF-2 from Neisseria gonorrhoeae (strain ATCC 700825 / FA 1090).